Reading from the N-terminus, the 909-residue chain is Protein translocase subunit SecA (909 aa).

ATP contacts are provided by residues Gln87, 105 to 109 (GEGKT), and Asp507. Residues 834–909 (EAVEEQRRRQ…KYKQCCGKLS (76 aa)) are disordered. Over residues 837–848 (EEQRRRQGDMQY) the composition is skewed to basic and acidic residues. The span at 859-871 (QGAGGEGAAGGTA) shows a compositional bias: gly residues. Zn(2+)-binding residues include Cys893, Cys895, Cys904, and Cys905.

Belongs to the SecA family. As to quaternary structure, monomer and homodimer. Part of the essential Sec protein translocation apparatus which comprises SecA, SecYEG and auxiliary proteins SecDF-YajC and YidC. Zn(2+) is required as a cofactor.

The protein localises to the cell inner membrane. It localises to the cytoplasm. It catalyses the reaction ATP + H2O + cellular proteinSide 1 = ADP + phosphate + cellular proteinSide 2.. In terms of biological role, part of the Sec protein translocase complex. Interacts with the SecYEG preprotein conducting channel. Has a central role in coupling the hydrolysis of ATP to the transfer of proteins into and across the cell membrane, serving both as a receptor for the preprotein-SecB complex and as an ATP-driven molecular motor driving the stepwise translocation of polypeptide chains across the membrane. The chain is Protein translocase subunit SecA from Alkalilimnicola ehrlichii (strain ATCC BAA-1101 / DSM 17681 / MLHE-1).